The primary structure comprises 347 residues: Heat-inducible transcription repressor HrcA (347 aa).

This sequence belongs to the HrcA family.

Negative regulator of class I heat shock genes (grpE-dnaK-dnaJ and groELS operons). Prevents heat-shock induction of these operons. The sequence is that of Heat-inducible transcription repressor HrcA from Lactococcus lactis subsp. lactis (strain IL1403) (Streptococcus lactis).